Reading from the N-terminus, the 207-residue chain is DNA-directed RNA polymerase subunit alpha (207 aa).

The protein belongs to the RNA polymerase alpha chain family. In terms of assembly, in plastids the minimal PEP RNA polymerase catalytic core is composed of four subunits: alpha, beta, beta', and beta''. When a (nuclear-encoded) sigma factor is associated with the core the holoenzyme is formed, which can initiate transcription.

The protein resides in the plastid. It localises to the chloroplast. The enzyme catalyses RNA(n) + a ribonucleoside 5'-triphosphate = RNA(n+1) + diphosphate. DNA-dependent RNA polymerase catalyzes the transcription of DNA into RNA using the four ribonucleoside triphosphates as substrates. This Euglena anabaena (Euglenaria anabaena) protein is DNA-directed RNA polymerase subunit alpha (rpoA).